Reading from the N-terminus, the 197-residue chain is Phosphoheptose isomerase (197 aa).

The region spanning 34–196 (MVHCLLSGNK…DHTLFPQDEQ (163 aa)) is the SIS domain. Residue 49 to 51 (NGG) coordinates substrate. The Zn(2+) site is built by histidine 58 and glutamate 62. Substrate contacts are provided by residues glutamate 62, 91–92 (ND), 117–119 (STS), serine 122, and glutamine 172. Residues glutamine 172 and histidine 180 each coordinate Zn(2+).

The protein belongs to the SIS family. GmhA subfamily. Homotetramer. The cofactor is Zn(2+).

Its subcellular location is the cytoplasm. The catalysed reaction is 2 D-sedoheptulose 7-phosphate = D-glycero-alpha-D-manno-heptose 7-phosphate + D-glycero-beta-D-manno-heptose 7-phosphate. The protein operates within carbohydrate biosynthesis; D-glycero-D-manno-heptose 7-phosphate biosynthesis; D-glycero-alpha-D-manno-heptose 7-phosphate and D-glycero-beta-D-manno-heptose 7-phosphate from sedoheptulose 7-phosphate: step 1/1. Functionally, catalyzes the isomerization of sedoheptulose 7-phosphate in D-glycero-D-manno-heptose 7-phosphate. The polypeptide is Phosphoheptose isomerase (Shewanella halifaxensis (strain HAW-EB4)).